A 154-amino-acid polypeptide reads, in one-letter code: 6,7-dimethyl-8-ribityllumazine synthase (154 aa).

Residues F15, 47–49, and 71–73 each bind 5-amino-6-(D-ribitylamino)uracil; these read TFD and AVI. (2S)-2-hydroxy-3-oxobutyl phosphate is bound at residue 76 to 77; it reads ET. H79 acts as the Proton donor in catalysis. Position 104 (L104) interacts with 5-amino-6-(D-ribitylamino)uracil. Residue R119 coordinates (2S)-2-hydroxy-3-oxobutyl phosphate.

The protein belongs to the DMRL synthase family.

The catalysed reaction is (2S)-2-hydroxy-3-oxobutyl phosphate + 5-amino-6-(D-ribitylamino)uracil = 6,7-dimethyl-8-(1-D-ribityl)lumazine + phosphate + 2 H2O + H(+). The protein operates within cofactor biosynthesis; riboflavin biosynthesis; riboflavin from 2-hydroxy-3-oxobutyl phosphate and 5-amino-6-(D-ribitylamino)uracil: step 1/2. In terms of biological role, catalyzes the formation of 6,7-dimethyl-8-ribityllumazine by condensation of 5-amino-6-(D-ribitylamino)uracil with 3,4-dihydroxy-2-butanone 4-phosphate. This is the penultimate step in the biosynthesis of riboflavin. This chain is 6,7-dimethyl-8-ribityllumazine synthase, found in Saccharolobus islandicus (strain L.S.2.15 / Lassen #1) (Sulfolobus islandicus).